A 263-amino-acid polypeptide reads, in one-letter code: MFVKSETLELKEEEEVLMLLGSASPASATLTPMSSSADEEEDEELRRPGSARGQRGAEAEQGVQGSPASGAGGCRPGRLLGLMHECKRRPSRSRAVSRGAKTAETVQRIKKTRRLKANNRERNRMHNLNAALDALREVLPTFPEDAKLTKIETLRFAHNYIWALTETLRLADHCAGAGGLQGALFTEAVLLSPGAALGASGDSPSPPSSWSCTNSPASSSNSTSPYSCTLSPASPGSDVDYWQPPPPEKHRYAPHLPLARDCI.

The tract at residues 20–76 (LGSASPASATLTPMSSSADEEEDEELRRPGSARGQRGAEAEQGVQGSPASGAGGCRP) is disordered. Polar residues predominate over residues 24-36 (SPASATLTPMSSS). The region spanning 112-164 (TRRLKANNRERNRMHNLNAALDALREVLPTFPEDAKLTKIETLRFAHNYIWAL) is the bHLH domain. Positions 197-231 (LGASGDSPSPPSSWSCTNSPASSSNSTSPYSCTLS) are enriched in low complexity. The interval 197–253 (LGASGDSPSPPSSWSCTNSPASSSNSTSPYSCTLSPASPGSDVDYWQPPPPEKHRYA) is disordered.

As to quaternary structure, efficient DNA binding requires dimerization with another bHLH protein.

Its subcellular location is the nucleus. Its function is as follows. Transcriptional regulator. Involved in neuronal differentiation. Activates transcription by binding to the E box (5'-CANNTG-3'). The sequence is that of Neurogenin-2 (Neurog2) from Mus musculus (Mouse).